The sequence spans 424 residues: Dihydroorotase (424 aa).

Zn(2+) is bound by residues histidine 61 and histidine 63. Residues histidine 63–arginine 65 and asparagine 95 contribute to the substrate site. Residues aspartate 153, histidine 180, and histidine 233 each coordinate Zn(2+). Asparagine 279 contributes to the substrate binding site. Aspartate 306 contacts Zn(2+). Residue aspartate 306 is part of the active site. Histidine 310 contacts substrate.

It belongs to the metallo-dependent hydrolases superfamily. DHOase family. Class I DHOase subfamily. It depends on Zn(2+) as a cofactor.

It carries out the reaction (S)-dihydroorotate + H2O = N-carbamoyl-L-aspartate + H(+). The protein operates within pyrimidine metabolism; UMP biosynthesis via de novo pathway; (S)-dihydroorotate from bicarbonate: step 3/3. Catalyzes the reversible cyclization of carbamoyl aspartate to dihydroorotate. The sequence is that of Dihydroorotase from Geobacter metallireducens (strain ATCC 53774 / DSM 7210 / GS-15).